Consider the following 422-residue polypeptide: Steroid hormone receptor ERR1 (422 aa).

The disordered stretch occupies residues 1–67; the sequence is MSSQVVGIEP…GAGPGEQGGG (67 aa). A phosphoserine mark is found at Ser-19 and Ser-22. Over residues 58–67 the composition is skewed to gly residues; the sequence is GAGPGEQGGG. Residues 76 to 151 constitute a DNA-binding region (nuclear receptor); that stretch reads KRLCLVCGDV…VGMLKEGVRL (76 aa). NR C4-type zinc fingers lie at residues 79–99 and 115–134; these read CLVC…CEAC and CPAS…CQAC. 4 positions are modified to N6-acetyllysine; by PCAF/KAT2B: Lys-129, Lys-138, Lys-160, and Lys-162. Glycyl lysine isopeptide (Lys-Gly) (interchain with G-Cter in SUMO2) cross-links involve residues Lys-189 and Lys-402. The 229-residue stretch at 192–420 folds into the NR LBD domain; sequence PVNALVSHLL…KLFLEMLEAM (229 aa).

The protein belongs to the nuclear hormone receptor family. NR3 subfamily. Binds DNA as a monomer or a homodimer. Interacts (via the AF2 domain) with coactivator PPARGC1A (via the L3 motif); the interaction greatly enhances transcriptional activity of genes involved in energy metabolism. Interacts with PIAS4; the interaction enhances sumoylation. Interacts with MAPK15; promotes re-localization of ESRRA to the cytoplasm through a XPO1-dependent mechanism then inhibits ESRRA transcriptional activity. In terms of processing, phosphorylation on Ser-19 enhances sumoylation on Lys-14 increasing repression of transcriptional activity. Post-translationally, sumoylated with SUMO2. Main site is Lys-14 which is enhanced by phosphorylation on Ser-19, cofactor activation, and by interaction with PIAS4. Sumoylation enhances repression of transcriptional activity, but has no effect on subcellular location nor on DNA binding. Reversibly acetylated. Acetylation by PCAF/KAT2 at Lys-129, Lys-138, Lys-160 and Lys-162 and PCAF/KAT2 decreases transcriptional activity probably by inhibiting DNA-binding activity; deacetylation involves SIRT1 and HDAC8 and increases DNA-binding.

It is found in the nucleus. The protein localises to the cytoplasm. In terms of biological role, binds to an ERR-alpha response element (ERRE) containing a single consensus half-site, 5'-TNAAGGTCA-3'. Can bind to the medium-chain acyl coenzyme A dehydrogenase (MCAD) response element NRRE-1 and may act as an important regulator of MCAD promoter. May function as a modulator of the estrogen signaling pathway in the uterus. Induces the expression of PERM1 in the skeletal muscle. This chain is Steroid hormone receptor ERR1 (ESRRA), found in Canis lupus familiaris (Dog).